The primary structure comprises 497 residues: Zinc finger protein 3 (497 aa).

The segment covering 1–20 has biased composition (basic and acidic residues); it reads MGTEKKEGLPKEETSEDSKP. The tract at residues 1 to 53 is disordered; the sequence is MGTEKKEGLPKEETSEDSKPHGQTVEKLAQEVCHGHEFGEASEEDMSEGHLRE. Glycyl lysine isopeptide (Lys-Gly) (interchain with G-Cter in SUMO2) cross-links involve residues Lys6 and Lys11. 13 consecutive C2H2-type zinc fingers follow at residues 136–158, 164–186, 192–214, 220–242, 248–270, 276–298, 304–326, 332–354, 360–382, 388–410, 416–438, 444–466, and 472–494; these read HTCKECGKAFNQNSHLIQHMRVH, FECKECGKTFGTNSSLRRHQRIH, FACTECGKAFIQSSHLIHHHRIH, YKCEECGKAFSQNSALILHQRIH, YECNECGKTFRVSSQLIQHQRIH, HECSECGKAFKHSSGLIRHQKIH, YLCNECGKGFGQSSELIRHQRIH, YECSECGKTFGQNSEIIRHIRIH, YVCKECGKAFRGNSELLRHERIH, YECFECGKAFRRTSHLIVHQRIH, HQCNECARTFWDNSELLLHQKIH, YECSECEKTFSQHSQLTIHQRIH, and YECQECQKTFSRSSHLLRHQSVH.

This sequence belongs to the krueppel C2H2-type zinc-finger protein family.

It localises to the nucleus. Its function is as follows. May be involved in transcriptional regulation. The sequence is that of Zinc finger protein 3 (Zfp3) from Mus musculus (Mouse).